The sequence spans 294 residues: Acetyl-coenzyme A carboxylase carboxyl transferase subunit beta (294 aa).

The 266-residue stretch at 29–294 (LWEKCPECGQ…TQVVKLQTNA (266 aa)) folds into the CoA carboxyltransferase N-terminal domain. The Zn(2+) site is built by cysteine 33, cysteine 36, cysteine 52, and cysteine 55. The C4-type zinc-finger motif lies at 33–55 (CPECGQVVYRKDLIDNCSVCSNC).

It belongs to the AccD/PCCB family. In terms of assembly, acetyl-CoA carboxylase is a heterohexamer composed of biotin carboxyl carrier protein (AccB), biotin carboxylase (AccC) and two subunits each of ACCase subunit alpha (AccA) and ACCase subunit beta (AccD). Zn(2+) serves as cofactor.

It is found in the cytoplasm. The catalysed reaction is N(6)-carboxybiotinyl-L-lysyl-[protein] + acetyl-CoA = N(6)-biotinyl-L-lysyl-[protein] + malonyl-CoA. It participates in lipid metabolism; malonyl-CoA biosynthesis; malonyl-CoA from acetyl-CoA: step 1/1. Functionally, component of the acetyl coenzyme A carboxylase (ACC) complex. Biotin carboxylase (BC) catalyzes the carboxylation of biotin on its carrier protein (BCCP) and then the CO(2) group is transferred by the transcarboxylase to acetyl-CoA to form malonyl-CoA. The sequence is that of Acetyl-coenzyme A carboxylase carboxyl transferase subunit beta from Prochlorococcus marinus (strain NATL2A).